We begin with the raw amino-acid sequence, 112 residues long: MKGPPTFCSLLLLSLLLSPDPTAAFLLPPSTACCTQLYRKPLSDKLLRKVIQVELQEADGDCHLQAFVLHLAQRSICIHPQNPSLSQWFEHQERKLHGTLPKLNFGMLRKMG.

The signal sequence occupies residues Met-1–Ala-24. Disulfide bonds link Cys-33-Cys-62 and Cys-34-Cys-77.

Belongs to the intercrine beta (chemokine CC) family. In terms of assembly, monomer, dimer, and tetramer. Heparin avidly promotes oligomerization. Interacts with TNFAIP6 (via Link domain). In terms of tissue distribution, testis, thymus, placenta, ovary and skin.

The protein localises to the secreted. Chemotactic factor that attracts skin-associated memory T-lymphocytes. May play a role in mediating homing of lymphocytes to cutaneous sites. Binds to CCR10. The protein is C-C motif chemokine 27 (CCL27) of Homo sapiens (Human).